We begin with the raw amino-acid sequence, 2201 residues long: Voltage-dependent T-type calcium channel subunit alpha-1I (2201 aa).

A disordered region spans residues 1-45; sequence MADSNLPPSSAAAPAPEPGITEQPGPRSPPPSPPGLEEPLEGTNP. At 1-76 the chain is on the cytoplasmic side; the sequence is MADSNLPPSS…RNWCIKMVCN (76 aa). Positions 26–36 are enriched in pro residues; that stretch reads PRSPPPSPPGL. Residues 64–399 form an I repeat; the sequence is TSPRNWCIKM…LCLVVIATQF (336 aa). The helical transmembrane segment at 77-97 threads the bilayer; sequence PWFECVSMLVILLNCVTLGMY. The Extracellular portion of the chain corresponds to 98–115; the sequence is QPCDDMECLSDRCKILQV. Residues 116–137 traverse the membrane as a helical segment; it reads FDDFIFIFFAMEMVLKMVALGI. The Cytoplasmic portion of the chain corresponds to 138-146; the sequence is FGKKCYLGD. Residues 147–166 form a helical membrane-spanning segment; it reads TWNRLDFFIVMAGMVEYSLD. Over 167-171 the chain is Extracellular; it reads LQNIN. N-linked (GlcNAc...) asparagine glycosylation occurs at N171. Residues 172–189 traverse the membrane as a helical segment; the sequence is LSAIRTVRVLRPLKAINR. Residues 190–209 lie on the Cytoplasmic side of the membrane; sequence VPSMRILVNLLLDTLPMLGN. Residues 210–230 traverse the membrane as a helical segment; it reads VLLLCFFVFFIFGIIGVQLWA. Residues 231–371 are Extracellular-facing; sequence GLLRNRCFLE…YYVMDAHSFY (141 aa). 2 N-linked (GlcNAc...) asparagine glycosylation sites follow: N242 and N309. A helical transmembrane segment spans residues 372–396; that stretch reads NFIYFILLIIVGSFFMINLCLVVIA. Residues 397–598 lie on the Cytoplasmic side of the membrane; sequence TQFSETKQRE…EKLRGIVDSK (202 aa). Disordered stretches follow at residues 463–500 and 513–579; these read QAMGPGTPAPAKPGPHAKEPSHCKLCPRHSPLDPTPHT and PSSC…AARL. Residues 545-554 show a composition bias toward low complexity; sequence SAEAEANGDG. An II repeat occupies 584–823; sequence WRETREKLRG…LLVAILVEGF (240 aa). Residues 599–619 form a helical membrane-spanning segment; the sequence is YFNRGIMMAILVNTVSMGIEH. At 620–632 the chain is on the extracellular side; it reads HEQPEELTNILEI. A helical membrane pass occupies residues 633-654; that stretch reads CNVVFTSMFALEMILKLAAFGL. The Cytoplasmic segment spans residues 655 to 660; it reads FDYLRN. Residues 661 to 679 form a helical membrane-spanning segment; that stretch reads PYNIFDSIIVIISIWEIVG. At 680-687 the chain is on the extracellular side; it reads QADGGLSV. The helical transmembrane segment at 688–711 threads the bilayer; sequence LRTFRLLRVLKLVRFMPALRRQLV. The Cytoplasmic portion of the chain corresponds to 712-722; that stretch reads VLMKTMDNVAT. Residues 723 to 743 traverse the membrane as a helical segment; that stretch reads FCMLLMLFIFIFSILGMHIFG. At 744 to 795 the chain is on the extracellular side; the sequence is CKFSLRTDTGDTVPDRKNFDSLLWAIVTVFQILTQEDWNVVLYNGMASTTPW. The chain crosses the membrane as a helical span at residues 796 to 820; sequence ASLYFVALMTFGNYVLFNLLVAILV. Topologically, residues 821–1125 are cytoplasmic; that stretch reads EGFQAEGDAN…NKFRILCQTI (305 aa). The tract at residues 936-969 is disordered; that stretch reads WGRSGTWASRRSSWNSLKHKPPSAEHESLLSGEG. A compositionally biased stretch (polar residues) spans 941 to 951; sequence TWASRRSSWNS. S1017 is modified (phosphoserine). The stretch at 1116–1393 is one III repeat; sequence NKFRILCQTI…MFVGVVVENF (278 aa). The helical transmembrane segment at 1126 to 1148 threads the bilayer; it reads IAHKLFDYVVLAFIFLNCITIAL. Topologically, residues 1149-1166 are extracellular; it reads ERPQIEAGSTERIFLTVS. Residues 1167 to 1187 traverse the membrane as a helical segment; the sequence is NYIFTAIFVGEMTLKVVSLGL. The Cytoplasmic portion of the chain corresponds to 1188 to 1197; that stretch reads YFGEQAYLRS. Residues 1198-1217 form a helical membrane-spanning segment; sequence SWNVLDGFLVFVSIIDIVVS. Topologically, residues 1218-1231 are extracellular; the sequence is VASAGGAKILGVLR. Residues 1232 to 1253 traverse the membrane as a helical segment; the sequence is VLRLLRTLRPLRVISRAPGLKL. Topologically, residues 1254 to 1263 are cytoplasmic; that stretch reads VVETLISSLK. The chain crosses the membrane as a helical span at residues 1264–1287; it reads PIGNIVLICCAFFIIFGILGVQLF. Over 1288-1364 the chain is Extracellular; sequence KGKFYHCLGV…DQQPVTNHNP (77 aa). N-linked (GlcNAc...) asparagine glycosylation is found at N1301 and N1304. Residues 1365 to 1390 form a helical membrane-spanning segment; that stretch reads WMLLYFISFLLIVSFFVLNMFVGVVV. At 1391–1445 the chain is on the cytoplasmic side; that stretch reads ENFHKCRQHQEAEEARRREEKRLRRLEKKRRKAQRLPYYATYCPTRLLIHSMCTS. Residues 1431–1692 form an IV repeat; the sequence is TYCPTRLLIH…VVVAVLMKHL (262 aa). The chain crosses the membrane as a helical span at residues 1446-1466; the sequence is HYLDIFITFIICLNVVTMSLE. The Extracellular portion of the chain corresponds to 1467-1480; sequence HYNQPTSLETALKY. Residues 1481 to 1502 form a helical membrane-spanning segment; sequence CNYMFTTVFVLEAVLKLVAFGL. At 1503-1509 the chain is on the cytoplasmic side; it reads RRFFKDR. A helical transmembrane segment spans residues 1510-1528; the sequence is WNQLDLAIVLLSVMGITLE. Topologically, residues 1529–1542 are extracellular; sequence EIEINAALPINPTI. A helical membrane pass occupies residues 1543-1566; that stretch reads IRIMRVLRIARVLKLLKMATGMRA. Residues 1567 to 1580 lie on the Cytoplasmic side of the membrane; the sequence is LLDTVVQALPQVGN. A helical transmembrane segment spans residues 1581-1601; the sequence is LGLLFMLLFFIYAALGVELFG. The Extracellular segment spans residues 1602–1664; sequence KLVCNDENPC…RSCLSSLQFV (63 aa). The helical transmembrane segment at 1665–1692 threads the bilayer; the sequence is SPLYFVSFVLTAQFVLINVVVAVLMKHL. Topologically, residues 1693–1835 are cytoplasmic; sequence DDSNKEAQED…EVQLAETEAF (143 aa). Disordered regions lie at residues 1846–1876, 1916–1938, 1992–2045, 2057–2105, and 2126–2201; these read LLGDDLSLEDPTACPPGRKDSKGELDPPEPM, LKHDSSQAPPSPFSPDGSSPLLQ, SDTS…TRRR, RGLR…HSET, and LTPA…KRKR. The segment covering 1992 to 2007 has biased composition (low complexity); sequence SDTSLDASPSSSAGSL. Composition is skewed to polar residues over residues 2008–2019 and 2066–2075; these read QTTLEDSLTLSD and HSSGGSTSPG. The segment covering 2077–2090 has biased composition (basic and acidic residues); that stretch reads THHDSMDPSDEEGR.

Belongs to the calcium channel alpha-1 subunit (TC 1.A.1.11) family. CACNA1I subfamily. In terms of assembly, interacts with CATSPER1 and CATSPER2, leading to suppress T-type calcium channel activity. Post-translationally, in response to raising of intracellular calcium, the T-type channels are activated by CaM-kinase II. In terms of tissue distribution, brain.

It localises to the membrane. It carries out the reaction Ca(2+)(in) = Ca(2+)(out). Functionally, voltage-sensitive calcium channels (VSCC) mediate the entry of calcium ions into excitable cells and are also involved in a variety of calcium-dependent processes, including muscle contraction, hormone or neurotransmitter release, gene expression, cell motility, cell division and cell death. This channel gives rise to T-type calcium currents. T-type calcium channels belong to the 'low-voltage activated (LVA)' group and are strongly blocked by nickel and mibefradil. A particularity of this type of channels is an opening at quite negative potentials, and a voltage-dependent inactivation. T-type channels serve pacemaking functions in both central neurons and cardiac nodal cells and support calcium signaling in secretory cells and vascular smooth muscle. They may also be involved in the modulation of firing patterns of neurons which is important for information processing as well as in cell growth processes. Gates in voltage ranges similar to, but higher than alpha 1G or alpha 1H. In terms of biological role, voltage-sensitive calcium channels (VSCC) mediate the entry of calcium ions into excitable cells and are also involved in a variety of calcium-dependent processes, including muscle contraction, hormone or neurotransmitter release, gene expression, cell motility, cell division and cell death. This channel gives rise to T-type calcium currents. The protein is Voltage-dependent T-type calcium channel subunit alpha-1I (Cacna1i) of Rattus norvegicus (Rat).